Reading from the N-terminus, the 432-residue chain is Adenylosuccinate synthetase (432 aa).

Residues 13–19 and 41–43 contribute to the GTP site; these read GDEGKGK and GHT. D14 acts as the Proton acceptor in catalysis. D14 and G41 together coordinate Mg(2+). IMP contacts are provided by residues 14–17, 39–42, T131, R145, Q226, T241, and R305; these read DEGK and NAGH. The Proton donor role is filled by H42. 301 to 307 serves as a coordination point for substrate; the sequence is SVTGRAR. GTP-binding positions include R307, 333-335, and 416-418; these read KLD and STG.

The protein belongs to the adenylosuccinate synthetase family. Homodimer. Requires Mg(2+) as cofactor.

Its subcellular location is the cytoplasm. The enzyme catalyses IMP + L-aspartate + GTP = N(6)-(1,2-dicarboxyethyl)-AMP + GDP + phosphate + 2 H(+). It participates in purine metabolism; AMP biosynthesis via de novo pathway; AMP from IMP: step 1/2. Plays an important role in the de novo pathway of purine nucleotide biosynthesis. Catalyzes the first committed step in the biosynthesis of AMP from IMP. The protein is Adenylosuccinate synthetase of Neisseria meningitidis serogroup C (strain 053442).